Reading from the N-terminus, the 240-residue chain is uncharacterized protein (240 aa).

A signal peptide spans 1–17 (MRMAFMLLALLFSFRNA).

This is an uncharacterized protein from Treponema pallidum (strain Nichols).